An 84-amino-acid polypeptide reads, in one-letter code: Cell division topological specificity factor (84 aa).

This sequence belongs to the MinE family.

In terms of biological role, prevents the cell division inhibition by proteins MinC and MinD at internal division sites while permitting inhibition at polar sites. This ensures cell division at the proper site by restricting the formation of a division septum at the midpoint of the long axis of the cell. This is Cell division topological specificity factor from Pseudomonas syringae pv. syringae (strain B728a).